We begin with the raw amino-acid sequence, 510 residues long: Probable gamma-aminobutyrate transaminase 3, mitochondrial (510 aa).

The transit peptide at 1–41 directs the protein to the mitochondrion; the sequence is MICRSLLLLRSNAASKASNIVKHVAATGCLPKYSSEAPARY. 166-167 contacts pyridoxal 5'-phosphate; the sequence is GS. Y199 provides a ligand contact to substrate. D306 lines the pyridoxal 5'-phosphate pocket. K335 contributes to the substrate binding site. Position 335 is an N6-(pyridoxal phosphate)lysine (K335).

It belongs to the class-III pyridoxal-phosphate-dependent aminotransferase family.

The protein localises to the mitochondrion. The enzyme catalyses 4-aminobutanoate + pyruvate = succinate semialdehyde + L-alanine. It catalyses the reaction 4-aminobutanoate + glyoxylate = succinate semialdehyde + glycine. In terms of biological role, transaminase that degrades gamma-amino butyric acid (GABA). This Oryza sativa subsp. japonica (Rice) protein is Probable gamma-aminobutyrate transaminase 3, mitochondrial.